Consider the following 198-residue polypeptide: Probable molybdenum cofactor guanylyltransferase (198 aa).

Residues 9-11, Lys-22, Asp-66, and Asp-95 contribute to the GTP site; that span reads LAG. Asp-95 is a Mg(2+) binding site.

The protein belongs to the MobA family. Mg(2+) serves as cofactor.

The protein localises to the cytoplasm. The enzyme catalyses Mo-molybdopterin + GTP + H(+) = Mo-molybdopterin guanine dinucleotide + diphosphate. Transfers a GMP moiety from GTP to Mo-molybdopterin (Mo-MPT) cofactor (Moco or molybdenum cofactor) to form Mo-molybdopterin guanine dinucleotide (Mo-MGD) cofactor. The polypeptide is Probable molybdenum cofactor guanylyltransferase (Clostridium perfringens (strain SM101 / Type A)).